A 570-amino-acid polypeptide reads, in one-letter code: Sulfite reductase [NADPH] hemoprotein beta-component (570 aa).

Positions 434, 440, 479, and 483 each coordinate [4Fe-4S] cluster. C483 is a siroheme binding site.

It belongs to the nitrite and sulfite reductase 4Fe-4S domain family. Alpha(8)-beta(8). The alpha component is a flavoprotein, the beta component is a hemoprotein. Siroheme serves as cofactor. The cofactor is [4Fe-4S] cluster.

It carries out the reaction hydrogen sulfide + 3 NADP(+) + 3 H2O = sulfite + 3 NADPH + 4 H(+). The protein operates within sulfur metabolism; hydrogen sulfide biosynthesis; hydrogen sulfide from sulfite (NADPH route): step 1/1. Functionally, component of the sulfite reductase complex that catalyzes the 6-electron reduction of sulfite to sulfide. This is one of several activities required for the biosynthesis of L-cysteine from sulfate. The chain is Sulfite reductase [NADPH] hemoprotein beta-component from Cronobacter sakazakii (strain ATCC BAA-894) (Enterobacter sakazakii).